A 236-amino-acid polypeptide reads, in one-letter code: 2,3,4,5-tetrahydropyridine-2,6-dicarboxylate N-acetyltransferase (236 aa).

Belongs to the transferase hexapeptide repeat family. DapH subfamily.

It carries out the reaction (S)-2,3,4,5-tetrahydrodipicolinate + acetyl-CoA + H2O = L-2-acetamido-6-oxoheptanedioate + CoA. It functions in the pathway amino-acid biosynthesis; L-lysine biosynthesis via DAP pathway; LL-2,6-diaminopimelate from (S)-tetrahydrodipicolinate (acetylase route): step 1/3. Its function is as follows. Catalyzes the transfer of an acetyl group from acetyl-CoA to tetrahydrodipicolinate. The sequence is that of 2,3,4,5-tetrahydropyridine-2,6-dicarboxylate N-acetyltransferase from Clostridium perfringens (strain SM101 / Type A).